A 274-amino-acid polypeptide reads, in one-letter code: Ribosomal RNA small subunit methyltransferase A (274 aa).

Positions 28, 30, 55, 77, 103, and 122 each coordinate S-adenosyl-L-methionine.

The protein belongs to the class I-like SAM-binding methyltransferase superfamily. rRNA adenine N(6)-methyltransferase family. RsmA subfamily.

It localises to the cytoplasm. It carries out the reaction adenosine(1518)/adenosine(1519) in 16S rRNA + 4 S-adenosyl-L-methionine = N(6)-dimethyladenosine(1518)/N(6)-dimethyladenosine(1519) in 16S rRNA + 4 S-adenosyl-L-homocysteine + 4 H(+). Specifically dimethylates two adjacent adenosines (A1518 and A1519) in the loop of a conserved hairpin near the 3'-end of 16S rRNA in the 30S particle. May play a critical role in biogenesis of 30S subunits. The chain is Ribosomal RNA small subunit methyltransferase A from Rhizobium meliloti (strain 1021) (Ensifer meliloti).